The following is a 426-amino-acid chain: Tol-Pal system protein TolB (426 aa).

A signal peptide spans 1–25 (MNAMSRISRRIFLALALSLAGLAQA).

Belongs to the TolB family. The Tol-Pal system is composed of five core proteins: the inner membrane proteins TolA, TolQ and TolR, the periplasmic protein TolB and the outer membrane protein Pal. They form a network linking the inner and outer membranes and the peptidoglycan layer.

The protein localises to the periplasm. In terms of biological role, part of the Tol-Pal system, which plays a role in outer membrane invagination during cell division and is important for maintaining outer membrane integrity. This Dechloromonas aromatica (strain RCB) protein is Tol-Pal system protein TolB.